The sequence spans 617 residues: Proline--tRNA ligase (617 aa).

The protein belongs to the class-II aminoacyl-tRNA synthetase family. ProS type 1 subfamily. In terms of assembly, homodimer.

It is found in the cytoplasm. It carries out the reaction tRNA(Pro) + L-proline + ATP = L-prolyl-tRNA(Pro) + AMP + diphosphate. Catalyzes the attachment of proline to tRNA(Pro) in a two-step reaction: proline is first activated by ATP to form Pro-AMP and then transferred to the acceptor end of tRNA(Pro). As ProRS can inadvertently accommodate and process non-cognate amino acids such as alanine and cysteine, to avoid such errors it has two additional distinct editing activities against alanine. One activity is designated as 'pretransfer' editing and involves the tRNA(Pro)-independent hydrolysis of activated Ala-AMP. The other activity is designated 'posttransfer' editing and involves deacylation of mischarged Ala-tRNA(Pro). The misacylated Cys-tRNA(Pro) is not edited by ProRS. The polypeptide is Proline--tRNA ligase (Streptococcus pneumoniae (strain Hungary19A-6)).